An 883-amino-acid chain; its full sequence is MEPTMGGEMESGGGAATGECVNRIPVPRPPSIEEFTIVKPISRGAFGKVYLGQKGNRLYAVKVVKKADMINKNMTHQVQAERDALALSKSPFIVHLYYSLQSANNVYLVMEYLIGGDVKSLLHIYGYFDEEMAVKYISEVALALDYLHRHGIIHRDLKPDNMLISNEGHIKLTDFGLSKVTLNRDIDINMMDILTTPSMAKPRQDYSRTPGQVLSLISSLGFHTPVAEGNHDTANVLSTQVSETSPLSQGLTCPMSVDQKDTTPYSSKLLKSCPEMVASHPRMPVKCLTSHLLQSRKRLATSSTSSPSHTFISSMESECHSSPRWEKDCQESDDAAGSTMMSWNTVEKPLCTKSVDAMETKSFNERDLELALSPIHNSSVVPATGNSYVNLAKKCSSGEVSWEARELDVNNINMTADTSQYCFHESNQRAVDSGGMTEEHLGKRSCKRIFELVDSSPRQGIIPNKKSCFEYECSNEMRDCYATQRTGFAFEVQDLKLLVYRDQQNDCVNKENVGSSFTDKHQTPEKSPVPMIEKNLMCELDDDCDKNSKKDYLSSSFLCSDGDRTPKSIHMDSDSSFPGISIMESPLGGQSLDPDKNIKESSLEESNIEDLLPVSPSCQESTLPKGVECPTIQDSNQKMLAPSSEVLKPLTSKRNAVAFRSFNSHINASNSSEPSKMSITSLDMMDVSCAYSGSYPTAITPTQRERSDMPYQQTPNQVKSETPYRTPKSVRRGAAPVDDGRILGTPDYLAPELLLARAHGPAVDWWALGVCLFEFLTGIPPFNDETPQQVFQNILKRDIPWPEGEEKLSDNAQSAVDILLTIDDTKRAGMKELKHHPLFSGVDWENLQHQKMPFIPQPDDETDTSYFEARNNAQHLTVSGFSL.

Met-1 is subject to N-acetylmethionine. Positions 1–23 (MEPTMGGEMESGGGAATGECVNR) are disordered. Residues 35–839 (FTIVKPISRG…MKELKHHPLF (805 aa)) enclose the Protein kinase domain. ATP contacts are provided by residues 41–49 (ISRGAFGKV) and Lys-62. Asp-156 functions as the Proton acceptor in the catalytic mechanism. Phosphothreonine is present on residues Thr-209 and Thr-224. Phosphoserine is present on Ser-295. Residues 298-317 (RLATSSTSSPSHTFISSMES) are disordered. The span at 301–314 (TSSTSSPSHTFISS) shows a compositional bias: low complexity. Ser-373 and Ser-456 each carry phosphoserine. A disordered region spans residues 511 to 530 (ENVGSSFTDKHQTPEKSPVP). A Phosphothreonine modification is found at Thr-523. 2 positions are modified to phosphoserine: Ser-556 and Ser-560. The segment at 569-597 (IHMDSDSSFPGISIMESPLGGQSLDPDKN) is disordered. Phosphoserine is present on residues Ser-635, Ser-661, and Ser-672. Residues 706–737 (RSDMPYQQTPNQVKSETPYRTPKSVRRGAAPV) are disordered. Polar residues predominate over residues 710–720 (PYQQTPNQVKS). Thr-726 bears the Phosphothreonine mark. A Phosphoserine modification is found at Ser-729. Phosphothreonine; by CDK1 is present on Thr-745. The region spanning 840-883 (SGVDWENLQHQKMPFIPQPDDETDTSYFEARNNAQHLTVSGFSL) is the AGC-kinase C-terminal domain. 2 positions are modified to phosphoserine: Ser-879 and Ser-882.

The protein belongs to the protein kinase superfamily. AGC Ser/Thr protein kinase family. In terms of processing, phosphorylation at Thr-745 by CDK1 during M phase activates its kinase activity. Maximum phosphorylation occurs in prometaphase.

The protein localises to the cytoplasm. Its subcellular location is the cytoskeleton. The protein resides in the microtubule organizing center. It localises to the centrosome. It is found in the nucleus. It carries out the reaction L-seryl-[protein] + ATP = O-phospho-L-seryl-[protein] + ADP + H(+). It catalyses the reaction L-threonyl-[protein] + ATP = O-phospho-L-threonyl-[protein] + ADP + H(+). Functionally, serine/threonine kinase that plays a key role in M phase by acting as a regulator of mitosis entry and maintenance. Acts by promoting the inactivation of protein phosphatase 2A (PP2A) during M phase: does not directly inhibit PP2A but acts by mediating phosphorylation and subsequent activation of ARPP19 and ENSA at 'Ser-62' and 'Ser-67', respectively. ARPP19 and ENSA are phosphatase inhibitors that specifically inhibit the PPP2R2D (PR55-delta) subunit of PP2A. Inactivation of PP2A during M phase is essential to keep cyclin-B1-CDK1 activity high. Following DNA damage, it is also involved in checkpoint recovery by being inhibited. This is Serine/threonine-protein kinase greatwall (MASTL) from Bos taurus (Bovine).